Reading from the N-terminus, the 83-residue chain is ATP synthase subunit c (83 aa).

2 helical membrane-spanning segments follow: residues 10 to 30 (IAVA…FGLL) and 52 to 72 (MFIV…IALY).

This sequence belongs to the ATPase C chain family. F-type ATPases have 2 components, F(1) - the catalytic core - and F(0) - the membrane proton channel. F(1) has five subunits: alpha(3), beta(3), gamma(1), delta(1), epsilon(1). F(0) has three main subunits: a(1), b(2) and c(10-14). The alpha and beta chains form an alternating ring which encloses part of the gamma chain. F(1) is attached to F(0) by a central stalk formed by the gamma and epsilon chains, while a peripheral stalk is formed by the delta and b chains.

It localises to the cell inner membrane. F(1)F(0) ATP synthase produces ATP from ADP in the presence of a proton or sodium gradient. F-type ATPases consist of two structural domains, F(1) containing the extramembraneous catalytic core and F(0) containing the membrane proton channel, linked together by a central stalk and a peripheral stalk. During catalysis, ATP synthesis in the catalytic domain of F(1) is coupled via a rotary mechanism of the central stalk subunits to proton translocation. Functionally, key component of the F(0) channel; it plays a direct role in translocation across the membrane. A homomeric c-ring of between 10-14 subunits forms the central stalk rotor element with the F(1) delta and epsilon subunits. The chain is ATP synthase subunit c from Shewanella amazonensis (strain ATCC BAA-1098 / SB2B).